Reading from the N-terminus, the 506-residue chain is RNA-splicing ligase RtcB homolog 1 (506 aa).

Mn(2+) is bound by residues D120, C123, H228, H260, and H354. N227–E231 serves as a coordination point for GMP. Residues H354–N355, G403–M406, S410, H429–G432, and K505 contribute to the GMP site. H429 acts as the GMP-histidine intermediate in catalysis.

Belongs to the RtcB family. In terms of assembly, catalytic component of the tRNA-splicing ligase complex. Mn(2+) serves as cofactor.

It catalyses the reaction a 3'-end 3'-phospho-ribonucleotide-RNA + a 5'-end dephospho-ribonucleoside-RNA + GTP = a ribonucleotidyl-ribonucleotide-RNA + GMP + diphosphate. The catalysed reaction is a 3'-end 2',3'-cyclophospho-ribonucleotide-RNA + a 5'-end dephospho-ribonucleoside-RNA + GTP + H2O = a ribonucleotidyl-ribonucleotide-RNA + GMP + diphosphate + H(+). Its function is as follows. Catalytic subunit of the tRNA-splicing ligase complex that acts by directly joining spliced tRNA halves to mature-sized tRNAs by incorporating the precursor-derived splice junction phosphate into the mature tRNA as a canonical 3',5'-phosphodiester. May act as an RNA ligase with broad substrate specificity, and may function toward other RNAs. The polypeptide is RNA-splicing ligase RtcB homolog 1 (Culex quinquefasciatus (Southern house mosquito)).